A 343-amino-acid polypeptide reads, in one-letter code: Apolipoprotein L6 (343 aa).

A compositionally biased stretch (basic and acidic residues) spans 1–10 (MDNQAERESE). A disordered region spans residues 1 to 24 (MDNQAERESEAGVGLQRDEDDAPL).

Belongs to the apolipoprotein L family. Widely expressed; highly expressed in the uterus, fetal brain and spinal cord, also detected in heart, liver, lung, colon, spleen, thymus, prostate, placenta, adrenal gland, salivary and mammary gland.

The protein resides in the cytoplasm. Its function is as follows. May affect the movement of lipids in the cytoplasm or allow the binding of lipids to organelles. The sequence is that of Apolipoprotein L6 (APOL6) from Homo sapiens (Human).